A 131-amino-acid chain; its full sequence is UPF0146 protein PYRAB01940 (131 aa).

The protein belongs to the UPF0146 family.

In Pyrococcus abyssi (strain GE5 / Orsay), this protein is UPF0146 protein PYRAB01940.